We begin with the raw amino-acid sequence, 166 residues long: 3-hydroxyacyl-[acyl-carrier-protein] dehydratase FabZ (166 aa).

The active site involves His72.

This sequence belongs to the thioester dehydratase family. FabZ subfamily.

The protein resides in the cytoplasm. The enzyme catalyses a (3R)-hydroxyacyl-[ACP] = a (2E)-enoyl-[ACP] + H2O. Its function is as follows. Involved in unsaturated fatty acids biosynthesis. Catalyzes the dehydration of short chain beta-hydroxyacyl-ACPs and long chain saturated and unsaturated beta-hydroxyacyl-ACPs. In Synechococcus sp. (strain JA-3-3Ab) (Cyanobacteria bacterium Yellowstone A-Prime), this protein is 3-hydroxyacyl-[acyl-carrier-protein] dehydratase FabZ.